Here is a 302-residue protein sequence, read N- to C-terminus: GrpE protein homolog 1, mitochondrial (302 aa).

A mitochondrion-targeting transit peptide spans 1–39; sequence MLVSRVLSRVSRSAGLRSSFSSVVTPKRNQIPIVASRFH. Residues 77 to 97 form a disordered region; it reads SAEPKGNESNTEVPKTGETSE.

It belongs to the GrpE family. As to quaternary structure, probable component of the PAM complex, at least composed of SSC1 (mtHsp70), MGE1, TIM44, PAM16/TIM16, PAM17 and PAM18/TIM14. Interacts with SSQ1.

The protein resides in the mitochondrion matrix. In terms of biological role, essential component of the PAM complex, a complex required for the translocation of transit peptide-containing proteins from the inner membrane into the mitochondrial matrix in an ATP-dependent manner. Seems to control the nucleotide-dependent binding of mitochondrial HSP70 to substrate proteins. Binds ATP. Interacts with copper ions Cu(2+). This Arabidopsis thaliana (Mouse-ear cress) protein is GrpE protein homolog 1, mitochondrial.